A 266-amino-acid polypeptide reads, in one-letter code: Apolipoprotein A-I (266 aa).

The signal sequence occupies residues 1-18; it reads MKAVVLTLAVLFLTGSQA. 2 consecutive repeat copies span residues 67-88 and 89-110. Residues 67-266 form a 10 X approximate tandem repeats region; the sequence is LKLLDNWDTL…DEATKKLNAQ (200 aa). M109 carries the methionine sulfoxide modification. The 3; half-length repeat unit spans residues 111-121; that stretch reads KDLEEVKKKVQ. Tandem repeats lie at residues 122–143, 144–165, 166–187, 188–209, and 210–231. The stretch at 232-242 is one 9; half-length repeat; the sequence is PALEDLRQGLL. Copy 10 of the repeat occupies 243–266; the sequence is PVLESFRTSLLAAVDEATKKLNAQ.

Belongs to the apolipoprotein A1/A4/E family. As to quaternary structure, homodimer. Interacts with APOA1BP and CLU. Component of a sperm activating protein complex (SPAP), consisting of APOA1, an immunoglobulin heavy chain, an immunoglobulin light chain and albumin. Interacts with NDRG1. Interacts with SCGB3A2. Interacts with NAXE and YJEFN3. Glycosylated. Post-translationally, palmitoylated. In terms of processing, phosphorylation sites are present in the extracellular medium.

Its subcellular location is the secreted. In terms of biological role, participates in the reverse transport of cholesterol from tissues to the liver for excretion by promoting cholesterol efflux from tissues and by acting as a cofactor for the lecithin cholesterol acyltransferase (LCAT). As part of the SPAP complex, activates spermatozoa motility. The protein is Apolipoprotein A-I (APOA1) of Odobenus rosmarus divergens (Pacific walrus).